The chain runs to 443 residues: tRNA(Ile2) 2-agmatinylcytidine synthetase TiaS (443 aa).

Belongs to the TiaS family.

It localises to the cytoplasm. The catalysed reaction is cytidine(34) in tRNA(Ile2) + agmatine + ATP + H2O = 2-agmatinylcytidine(34) in tRNA(Ile2) + AMP + 2 phosphate + 2 H(+). In terms of biological role, ATP-dependent agmatine transferase that catalyzes the formation of 2-agmatinylcytidine (agm2C) at the wobble position (C34) of tRNA(Ile2), converting the codon specificity from AUG to AUA. This Saccharolobus islandicus (strain L.S.2.15 / Lassen #1) (Sulfolobus islandicus) protein is tRNA(Ile2) 2-agmatinylcytidine synthetase TiaS.